The chain runs to 543 residues: Splicing factor U2af large subunit B (543 aa).

Residues Met-1 to Asp-10 show a composition bias toward gly residues. A disordered region spans residues Met-1–Ser-171. Composition is skewed to basic and acidic residues over residues Val-17 to Arg-78 and Glu-88 to Gly-114. The segment covering His-115–Ser-126 has biased composition (basic residues). 3 RRM domains span residues Arg-207–Asp-290, Asp-327–Gln-405, and Gln-446–Asn-532.

It belongs to the splicing factor SR family.

It localises to the nucleus. Its function is as follows. Necessary for the splicing of pre-mRNA. This Triticum aestivum (Wheat) protein is Splicing factor U2af large subunit B (U2AF65B).